Here is a 364-residue protein sequence, read N- to C-terminus: DNA replication and repair protein RecF (364 aa).

30–37 (GENGSGKT) contributes to the ATP binding site.

It belongs to the RecF family.

It localises to the cytoplasm. The RecF protein is involved in DNA metabolism; it is required for DNA replication and normal SOS inducibility. RecF binds preferentially to single-stranded, linear DNA. It also seems to bind ATP. This is DNA replication and repair protein RecF from Xylella fastidiosa (strain M23).